The primary structure comprises 459 residues: Protein phosphatase 1M (459 aa).

Positions 1–10 are enriched in basic residues; sequence MSAGWFRRRF. The segment at 1–64 is disordered; it reads MSAGWFRRRF…SRPVRSPARG (64 aa). Over residues 14–27 the composition is skewed to pro residues; that stretch reads EPLPAPRPPGPHAS. Over residues 38–48 the composition is skewed to low complexity; that stretch reads RGSSSSPGAAD. Mn(2+) is bound by residues D125 and G126. One can recognise a PPM-type phosphatase domain in the interval 162-459; sequence MHLNGRCICP…HSQGQESSDH (298 aa).

Belongs to the PP2C family. It depends on Mg(2+) as a cofactor. Requires Mn(2+) as cofactor.

It localises to the nucleus. The enzyme catalyses O-phospho-L-seryl-[protein] + H2O = L-seryl-[protein] + phosphate. The catalysed reaction is O-phospho-L-threonyl-[protein] + H2O = L-threonyl-[protein] + phosphate. This chain is Protein phosphatase 1M (PPM1M), found in Homo sapiens (Human).